Consider the following 256-residue polypeptide: 1-(5-phosphoribosyl)-5-[(5-phosphoribosylamino)methylideneamino] imidazole-4-carboxamide isomerase (256 aa).

Residue aspartate 8 is the Proton acceptor of the active site. Residue aspartate 129 is the Proton donor of the active site.

Belongs to the HisA/HisF family.

Its subcellular location is the cytoplasm. It catalyses the reaction 1-(5-phospho-beta-D-ribosyl)-5-[(5-phospho-beta-D-ribosylamino)methylideneamino]imidazole-4-carboxamide = 5-[(5-phospho-1-deoxy-D-ribulos-1-ylimino)methylamino]-1-(5-phospho-beta-D-ribosyl)imidazole-4-carboxamide. It participates in amino-acid biosynthesis; L-histidine biosynthesis; L-histidine from 5-phospho-alpha-D-ribose 1-diphosphate: step 4/9. This Picosynechococcus sp. (strain ATCC 27264 / PCC 7002 / PR-6) (Agmenellum quadruplicatum) protein is 1-(5-phosphoribosyl)-5-[(5-phosphoribosylamino)methylideneamino] imidazole-4-carboxamide isomerase.